Consider the following 420-residue polypeptide: MSRRYLFTSESVTEGHPDKICDQISDTILDTLLTQDPTSRVAAEVVVNTGLVLITGEITTKANVNYANIARQKIAEIGYTNADNGFSASSTSVIVALDEQSPDIAQGVNTAQETREQDSEELFDKIGAGDQGIMFGFACNETPELMPLPICLAHRIARRLAAVRKTGELSYLRPDGKTQVTVVYEDGRPVGIDTVLISTQHTATIGDITDEAAVQAKIKQDLWTAVVEPVFGDLEIKPDQETRFLVNPTGKFVIGGPQGDSGLTGRKIIVDTYGGYSRHGGGAFSGKDPTKVDRSAAYAARYVAKNIVAAGLAEKCEVQLSYAIGVARPVSIFLDTFGTGKVDDEILLGLVKDNFELRPAGIIHSFNLRNLPSERGGRFYQDVAAYGHLGRNDLDLPWERTDKADFLKQAVTHSLSAAIA.

Histidine 16 contributes to the ATP binding site. Mg(2+) is bound at residue aspartate 18. Glutamate 44 contributes to the K(+) binding site. Positions 57 and 100 each coordinate L-methionine. Positions 100-110 are flexible loop; that stretch reads QSPDIAQGVNT. Residues 175–177, 251–252, aspartate 260, 266–267, alanine 283, and lysine 287 each bind ATP; these read DGK, KF, and RK. An L-methionine-binding site is contributed by aspartate 260. Lysine 291 provides a ligand contact to L-methionine.

This sequence belongs to the AdoMet synthase family. In terms of assembly, homotetramer; dimer of dimers. The cofactor is Mg(2+). Requires K(+) as cofactor.

Its subcellular location is the cytoplasm. It carries out the reaction L-methionine + ATP + H2O = S-adenosyl-L-methionine + phosphate + diphosphate. It participates in amino-acid biosynthesis; S-adenosyl-L-methionine biosynthesis; S-adenosyl-L-methionine from L-methionine: step 1/1. Its function is as follows. Catalyzes the formation of S-adenosylmethionine (AdoMet) from methionine and ATP. The overall synthetic reaction is composed of two sequential steps, AdoMet formation and the subsequent tripolyphosphate hydrolysis which occurs prior to release of AdoMet from the enzyme. In Trichormus variabilis (strain ATCC 29413 / PCC 7937) (Anabaena variabilis), this protein is S-adenosylmethionine synthase.